The chain runs to 347 residues: Microtubule-associated protein Jupiter (347 aa).

The span at 1–14 (MISNFDCTDNQASS) shows a compositional bias: polar residues. The interval 1–33 (MISNFDCTDNQASSKVLRPPGGGSSDIFGSEMP) is disordered. Serine 24 carries the phosphoserine modification. 2 positions are modified to phosphothreonine: threonine 35 and threonine 96. Residues serine 105, serine 134, and serine 145 each carry the phosphoserine modification. Disordered regions lie at residues 127–193 (HYNG…PTPP) and 303–347 (GNPV…SGLW). Residues 132–145 (SGSVSSASSSVSSS) are compositionally biased toward low complexity. A compositionally biased stretch (polar residues) spans 146–164 (TENLKMNSGSRSVFRNMST). Pro residues predominate over residues 181–193 (PPSPVPIEVPTPP).

This sequence belongs to the MAP Jupiter family.

It localises to the nucleus. It is found in the cytoplasm. The protein localises to the cytoskeleton. The protein resides in the spindle. Functionally, binds to all microtubule populations. The sequence is that of Microtubule-associated protein Jupiter from Drosophila yakuba (Fruit fly).